Reading from the N-terminus, the 245-residue chain is Ribonuclease 3 (245 aa).

The RNase III domain maps to 18 to 146 (LSKFLENLSI…FVGAIYLDSG (129 aa)). Mg(2+) is bound at residue Glu-59. Asp-63 is a catalytic residue. Mg(2+) is bound by residues Asp-132 and Glu-135. Glu-135 is a catalytic residue. The DRBM domain maps to 173 to 242 (DYKSLLQEYV…AEVALKAMEN (70 aa)).

It belongs to the ribonuclease III family. Homodimer. Mg(2+) is required as a cofactor.

The protein resides in the cytoplasm. It carries out the reaction Endonucleolytic cleavage to 5'-phosphomonoester.. Functionally, digests double-stranded RNA. Involved in the processing of primary rRNA transcript to yield the immediate precursors to the large and small rRNAs (23S and 16S). Processes some mRNAs, and tRNAs when they are encoded in the rRNA operon. Processes pre-crRNA and tracrRNA of type II CRISPR loci if present in the organism. The polypeptide is Ribonuclease 3 (Borreliella burgdorferi (strain ATCC 35210 / DSM 4680 / CIP 102532 / B31) (Borrelia burgdorferi)).